A 108-amino-acid chain; its full sequence is UPF0102 protein SO_0299 (108 aa).

This sequence belongs to the UPF0102 family.

The protein is UPF0102 protein SO_0299 of Shewanella oneidensis (strain ATCC 700550 / JCM 31522 / CIP 106686 / LMG 19005 / NCIMB 14063 / MR-1).